Reading from the N-terminus, the 152-residue chain is Transcriptional repressor NrdR (152 aa).

A zinc finger lies at 3 to 34 (CPHCHHNGSRVIDSRPAEDGMSIRRRRECVNC). An ATP-cone domain is found at 49–139 (LLVVKKDGTR…VYRQFKDVDA (91 aa)).

It belongs to the NrdR family. It depends on Zn(2+) as a cofactor.

Its function is as follows. Negatively regulates transcription of bacterial ribonucleotide reductase nrd genes and operons by binding to NrdR-boxes. The polypeptide is Transcriptional repressor NrdR (Limosilactobacillus fermentum (strain NBRC 3956 / LMG 18251) (Lactobacillus fermentum)).